A 97-amino-acid chain; its full sequence is Protein 9b (97 aa).

A 9b domain is found at 8-97 (VPPALHLVDP…PDEFVVVTAK (90 aa)).

As to quaternary structure, homodimer.

The protein localises to the host cytoplasmic vesicle membrane. It is found in the host cytoplasm. The protein is Protein 9b of Bat coronavirus 279/2005 (BtCoV).